Reading from the N-terminus, the 154-residue chain is 17 kDa surface antigen (154 aa).

Residues 1-19 form the signal peptide; the sequence is MKLLSKIMVIALATSMLQA. Cys20 carries the N-palmitoyl cysteine lipid modification. Cys20 carries the S-diacylglycerol cysteine lipid modification.

It belongs to the rickettsiale 17 kDa surface antigen family.

It is found in the cell outer membrane. The chain is 17 kDa surface antigen (omp) from Rickettsia parkeri.